Reading from the N-terminus, the 339-residue chain is Glycerol-3-phosphate dehydrogenase [NAD(P)+] (339 aa).

S13, W14, and K108 together coordinate NADPH. Sn-glycerol 3-phosphate-binding residues include K108, G139, and S141. An NADPH-binding site is contributed by A143. Residues K194, D247, S257, R258, and N259 each contribute to the sn-glycerol 3-phosphate site. Residue K194 is the Proton acceptor of the active site. Residue R258 coordinates NADPH. NADPH-binding residues include V282 and E284.

It belongs to the NAD-dependent glycerol-3-phosphate dehydrogenase family.

It is found in the cytoplasm. It catalyses the reaction sn-glycerol 3-phosphate + NAD(+) = dihydroxyacetone phosphate + NADH + H(+). It carries out the reaction sn-glycerol 3-phosphate + NADP(+) = dihydroxyacetone phosphate + NADPH + H(+). The protein operates within membrane lipid metabolism; glycerophospholipid metabolism. In terms of biological role, catalyzes the reduction of the glycolytic intermediate dihydroxyacetone phosphate (DHAP) to sn-glycerol 3-phosphate (G3P), the key precursor for phospholipid synthesis. This chain is Glycerol-3-phosphate dehydrogenase [NAD(P)+], found in Streptococcus mutans serotype c (strain ATCC 700610 / UA159).